The following is a 1202-amino-acid chain: Nitric oxide synthase 3 (1202 aa).

Positions 1-70 (MGNLKSVGQE…PPDGPKFPRV (70 aa)) are disordered. Residue Gly2 is the site of N-myristoyl glycine attachment. 2 S-palmitoyl cysteine lipidation sites follow: Cys15 and Cys26. Gly residues predominate over residues 15–27 (CGLGLGLGLGLCG). The segment covering 33-65 (SPAPEPSQAPVPPSPTRPAPDHSPPLTRPPDGP) has biased composition (pro residues). Zn(2+)-binding residues include Cys93 and Cys98. Positions 97 to 485 (RCLGSLVFPR…PDPWKGSAAK (389 aa)) are interaction with NOSIP. Residue Ser101 coordinates (6R)-L-erythro-5,6,7,8-tetrahydrobiopterin. Heme b is bound at residue Cys183. Positions 246, 355, 356, and 360 each coordinate L-arginine. Positions 445, 446, and 459 each coordinate (6R)-L-erythro-5,6,7,8-tetrahydrobiopterin. Tyr474 serves as a coordination point for heme b. Residues 489-509 (ITRKKTFKEVANAVKISASLM) are calmodulin-binding. Thr494 is modified (phosphothreonine; by AMPK). Positions 519 to 702 (ATILYGSETG…AFRGWAQAAF (184 aa)) constitute a Flavodoxin-like domain. FMN-binding residues include Ser525, Glu526, Thr527, Arg529, Ser571, and Thr572. A phosphoserine mark is found at Ser614, Ser632, and Ser637. 4 residues coordinate FMN: Ser653, Cys660, Glu686, and Gln690. The FAD-binding FR-type domain maps to 755–1001 (RKMFQATILS…IRGAPSFRLP (247 aa)). Position 775 (Arg775) interacts with NADP(+). His797 contacts FAD. Residues 817 to 843 (EDPPPSTEPVAVEQLEKGSPGGPPPGW) form a disordered region. The residue at position 835 (Ser835) is a Phosphoserine. FAD-binding residues include Arg937, Tyr939, Ser940, Thr955, Ala957, Tyr961, Val974, Cys975, and Ser976. 7 residues coordinate NADP(+): Thr1015, Arg1048, Ser1077, Arg1078, Lys1084, Tyr1086, and Gln1088. Residue Thr1174 is modified to Phosphothreonine. Ser1176 bears the Phosphoserine; by AMPK mark. At Ser1178 the chain carries Phosphoserine.

This sequence belongs to the NOS family. In terms of assembly, homodimer. Interacts with NOSIP and NOSTRIN. Interacts with HSP90AB1. Forms a complex with ASL, ASS1 and SLC7A1; the complex regulates cell-autonomous L-arginine synthesis and citrulline recycling while channeling extracellular L-arginine to nitric oxide synthesis pathway. Requires heme b as cofactor. FAD serves as cofactor. It depends on FMN as a cofactor. The cofactor is (6R)-L-erythro-5,6,7,8-tetrahydrobiopterin. Phosphorylation by AMPK at Ser-1176 in the presence of Ca(2+)-calmodulin (CaM) activates activity. In absence of Ca(2+)-calmodulin, AMPK also phosphorylates Thr-494, resulting in inhibition of activity. In terms of tissue distribution, expressed constitutively by vascular endothelium. Detected in alveolar and serosal epithelial cells as well as in endothelial cells in one day old rat. In adult lung, detected in rare endothelial cells.

The protein localises to the membrane. It is found in the caveola. The protein resides in the cytoplasm. It localises to the cytoskeleton. Its subcellular location is the golgi apparatus. The protein localises to the cell membrane. The catalysed reaction is 2 L-arginine + 3 NADPH + 4 O2 + H(+) = 2 L-citrulline + 2 nitric oxide + 3 NADP(+) + 4 H2O. Stimulated by calcium/calmodulin. Inhibited by NOSIP and NOSTRIN. Functionally, produces nitric oxide (NO) which is implicated in vascular smooth muscle relaxation through a cGMP-mediated signal transduction pathway. NO mediates vascular endothelial growth factor (VEGF)-induced angiogenesis in coronary vessels and promotes blood clotting through the activation of platelets. The polypeptide is Nitric oxide synthase 3 (Rattus norvegicus (Rat)).